A 491-amino-acid polypeptide reads, in one-letter code: Glutamine synthetase (491 aa).

The GS beta-grasp domain maps to 23–111 (NNVRQVLCAF…MFGNVYEAWG (89 aa)). The GS catalytic domain occupies 119 to 491 (PRGYVAKRYE…PWEFMKYFDI (373 aa)). Mg(2+) is bound by residues glutamate 143 and glutamate 145. Glutamate 225 is an ATP binding site. Glutamate 230 and glutamate 238 together coordinate Mg(2+). Residues 282–283 (NA) and alanine 283 each bind L-glutamate. Histidine 287 is a binding site for Mg(2+). ATP-binding positions include 289 to 291 (HQS) and serine 291. L-glutamate is bound by residues arginine 344, glutamate 350, and arginine 362. ATP-binding residues include arginine 362 and arginine 367. Mg(2+) is bound at residue glutamate 381. L-glutamate is bound at residue arginine 383.

The protein belongs to the glutamine synthetase family. As to quaternary structure, oligomer of 12 subunits arranged in the form of two hexagons. Mg(2+) is required as a cofactor.

The protein localises to the cytoplasm. The enzyme catalyses L-glutamate + NH4(+) + ATP = L-glutamine + ADP + phosphate + H(+). Functionally, probably involved in nitrogen metabolism via ammonium assimilation. Catalyzes the ATP-dependent biosynthesis of glutamine from glutamate and ammonia. Beta-glutamate is a much poorer substrate than alpha-glutamate. The protein is Glutamine synthetase of Archaeoglobus fulgidus (strain ATCC 49558 / DSM 4304 / JCM 9628 / NBRC 100126 / VC-16).